The sequence spans 709 residues: Nicastrin (709 aa).

Positions 1 to 33 (MATAGGGSGADPGSRGLLRLLSFCVLLAGLCRG) are cleaved as a signal peptide. The Extracellular portion of the chain corresponds to 34–669 (NSVERKIYIP…IFLIASKELE (636 aa)). N-linked (GlcNAc...) asparagine glycosylation is found at Asn45 and Asn55. Cystine bridges form between Cys50-Cys62 and Cys140-Cys159. Asn187, Asn200, and Asn204 each carry an N-linked (GlcNAc...) asparagine glycan. Disulfide bonds link Cys195/Cys213 and Cys230/Cys248. Residues Asn264, Asn387, Asn417, Asn435, Asn464, Asn506, Asn530, Asn562, Asn573, Asn580, and Asn612 are each glycosylated (N-linked (GlcNAc...) asparagine). A disulfide bridge links Cys586 with Cys620. A helical membrane pass occupies residues 670–690 (LITLTVGFGILIFSLIVTYCI). Residues 691 to 709 (NAKADVLFIAPREPGAVSY) lie on the Cytoplasmic side of the membrane.

The protein belongs to the nicastrin family. Component of the gamma-secretase complex. The functional gamma-secretase complex is composed of at least four polypeptides: a presenilin homodimer (PSEN1 or PSEN2), nicastrin (NCSTN), APH1 (APH1A or APH1B) and PSENEN/PEN2. Binds to proteolytic processed C-terminal fragments C83 and C99 of the amyloid precursor protein (APP). Interacts with PSEN1 and PSEN2. In terms of processing, N-glycosylated. As to expression, detected in brain (at protein level). Widely expressed.

It localises to the membrane. Its subcellular location is the cytoplasmic vesicle membrane. It is found in the melanosome. In terms of biological role, essential subunit of the gamma-secretase complex, an endoprotease complex that catalyzes the intramembrane cleavage of integral membrane proteins such as Notch receptors and APP (amyloid-beta precursor protein). The gamma-secretase complex plays a role in Notch and Wnt signaling cascades and regulation of downstream processes via its role in processing key regulatory proteins, and by regulating cytosolic CTNNB1 levels. In Homo sapiens (Human), this protein is Nicastrin (NCSTN).